Here is a 111-residue protein sequence, read N- to C-terminus: MTRVKRGNVARKRRNKILELNRGYRGSHSTLFRTAQQRTLKALTTAYTDRRKKKRTYRRLWIRRINAAVRTKGTTYSKFIHTMKKDQIMLNRKVLSQLVILDPPSFSTLTK.

This sequence belongs to the bacterial ribosomal protein bL20 family.

It localises to the plastid. The protein resides in the chloroplast. In terms of biological role, binds directly to 23S ribosomal RNA and is necessary for the in vitro assembly process of the 50S ribosomal subunit. It is not involved in the protein synthesizing functions of that subunit. The protein is Large ribosomal subunit protein bL20c of Ostreococcus tauri.